A 584-amino-acid polypeptide reads, in one-letter code: Keratin, type I cytoskeletal 10 (584 aa).

A compositionally biased stretch (low complexity) spans 1–15; it reads MSVRYSSSKHYSSSR. Positions 1–24 are disordered; it reads MSVRYSSSKHYSSSRSGGGGGGGG. A head region spans residues 1–145; sequence MSVRYSSSKH…GGDGGLLSGN (145 aa). Phosphoserine occurs at positions 14, 16, 42, 53, 56, and 170. The tract at residues 146–181 is coil 1A; that stretch reads EKVTMQNLNDRLASYLDKVRALEESNYELEGKIKEW. The region spanning 146 to 460 is the IF rod domain; that stretch reads EKVTMQNLND…SLLEGEGSSG (315 aa). The interval 182–202 is linker 1; sequence YEKHGNSHQGEPRDYSKYYKT. A coil 1B region spans residues 203-294; it reads IDDLKNQILN…KNHEEEMKDL (92 aa). The linker 12 stretch occupies residues 295–317; that stretch reads RNVSTGDVNVEMNAAPGVDLTQL. The coil 2 stretch occupies residues 318–456; it reads LNNMRSQYEQ…QTYRSLLEGE (139 aa). The segment at 453 to 584 is disordered; sequence LEGEGSSGGG…GESSSKGPRY (132 aa). Over residues 457 to 563 the composition is skewed to gly residues; it reads GSSGGGGRGG…GGGYGGGSSS (107 aa). A tail region spans residues 457 to 584; the sequence is GSSGGGGRGG…GESSSKGPRY (128 aa). The segment covering 564–584 has biased composition (low complexity); it reads GGHKSSSSGSVGESSSKGPRY.

It belongs to the intermediate filament family. As to quaternary structure, heterotetramer of two type I and two type II keratins. Heterodimer with KRT1. Two heterodimers of KRT1 and KRT10 form a heterotetramer. The KRT10 subunit in the heterotetramer is probably disulfide-linked. Interacts with PLEC isoform 1C, when in a heterodimer with KRT1. In terms of assembly, (Microbial infection) Interacts (via C-terminal tail domain) with the S.aureus clumping factor, clfB; this interaction probably mediates S.aureus attachment to the keratinized squamous epithelial cells from the nasal cavity. (Microbial infection) Interacts (via the C-terminal tail domain) with S.pneumoniae serine-rich repeat protein PsrP; this interaction probably mediates S.pneumoniae adherence to lung tissue and subsequent pathogenesis. Neither protein has to be glycosylated for the interaction to occur. In terms of tissue distribution, seen in all suprabasal cell layers including stratum corneum. Expressed on the surface of lung cell lines. Localized on the surface of desquamated nasal epithelial cells (at protein level).

It localises to the secreted. Its subcellular location is the extracellular space. The protein resides in the cell surface. The protein localises to the cytoplasm. Its function is as follows. Plays a role in the establishment of the epidermal barrier on plantar skin. Involved in the maintenance of cell layer development and keratin filament bundles in suprabasal cells of the epithelium. In terms of biological role, (Microbial infection) Acts as a mediator of S.aureus adherence to desquamated nasal epithelial cells via clfB, and hence may play a role in nasal colonization. (Microbial infection) Binds S.pneumoniae PsrP, mediating adherence of the bacteria to lung cell lines. Reduction of levels of KRT10 keratin decrease adherence, overexpression increases adherence. Neither protein has to be glycosylated for the interaction to occur. The sequence is that of Keratin, type I cytoskeletal 10 (KRT10) from Homo sapiens (Human).